Consider the following 191-residue polypeptide: NF-kappa-B inhibitor-interacting Ras-like protein 2 (191 aa).

Residues 1–191 form a small GTPase-like region; sequence MGKSCKVVVC…KNKGSGSLDG (191 aa). 11-18 contacts GTP; it reads GQASVGKT. The Effector region signature appears at 35 to 43; it reads MIETQEDIY. GTP is bound by residues 61-65 and 120-123; these read DTRGL and NKCD. Residues 169 to 191 form a disordered region; the sequence is TQPQSKSAFPLSRKNKGSGSLDG.

It belongs to the small GTPase superfamily. Ras family. KappaB-Ras subfamily. In terms of assembly, interacts with both NF-kappa-B inhibitor alpha (NFKBIA) and beta (NFKBIB) in vitro. However, it probably only interacts with NFKBIB in vivo. Interacts with GFOD1.

The protein resides in the cytoplasm. Functionally, atypical Ras-like protein that acts as a potent regulator of NF-kappa-B activity by preventing the degradation of NF-kappa-B inhibitor beta (NFKBIB) by most signals, explaining why NFKBIB is more resistant to degradation. May act by blocking phosphorylation of NFKBIB and nuclear localization of p65/RELA NF-kappa-B subunit. It is unclear whether it acts as a GTPase. Both GTP- and GDP-bound forms block phosphorylation of NFKBIB. This Mus musculus (Mouse) protein is NF-kappa-B inhibitor-interacting Ras-like protein 2 (Nkiras2).